Here is a 162-residue protein sequence, read N- to C-terminus: Large ribosomal subunit protein uL15 (162 aa).

The interval 1-44 is disordered; the sequence is MKLNELRDNPGATKNRIRVGRGIGSGKGKTAGRGVKGQKSREGV. Residues 21 to 35 show a composition bias toward gly residues; sequence RGIGSGKGKTAGRGV.

It belongs to the universal ribosomal protein uL15 family. Part of the 50S ribosomal subunit.

Functionally, binds to the 23S rRNA. The chain is Large ribosomal subunit protein uL15 from Rhodospirillum rubrum (strain ATCC 11170 / ATH 1.1.1 / DSM 467 / LMG 4362 / NCIMB 8255 / S1).